The primary structure comprises 530 residues: Glucose-6-phosphate 1-dehydrogenase (530 aa).

Residues 53–60, arginine 87, tyrosine 162, and lysine 186 contribute to the NADP(+) site; that span reads GASGDLAK. Residues lysine 186, 216 to 220, glutamate 254, and aspartate 273 contribute to the D-glucose 6-phosphate site; that span reads HYLGK. Histidine 278 serves as the catalytic Proton acceptor. Arginine 372 provides a ligand contact to NADP(+). D-glucose 6-phosphate-binding residues include lysine 375 and arginine 380. Positions 381, 385, and 408 each coordinate NADP(+). Glutamine 410 contacts D-glucose 6-phosphate. NADP(+) contacts are provided by residues 416-418, 436-438, arginine 502, tyrosine 518, and tryptophan 524; these read YAK and DLT.

The protein belongs to the glucose-6-phosphate dehydrogenase family.

It localises to the cytoplasm. Its subcellular location is the cytosol. The enzyme catalyses D-glucose 6-phosphate + NADP(+) = 6-phospho-D-glucono-1,5-lactone + NADPH + H(+). It participates in carbohydrate degradation; pentose phosphate pathway; D-ribulose 5-phosphate from D-glucose 6-phosphate (oxidative stage): step 1/3. In terms of biological role, cytosolic glucose-6-phosphate dehydrogenase that catalyzes the first and rate-limiting step of the oxidative branch within the pentose phosphate pathway/shunt, an alternative route to glycolysis for the dissimilation of carbohydrates and a major source of reducing power and metabolic intermediates for fatty acid and nucleic acid biosynthetic processes. This is Glucose-6-phosphate 1-dehydrogenase (g6pd) from Takifugu rubripes (Japanese pufferfish).